Consider the following 479-residue polypeptide: Ribosomal RNA small subunit methyltransferase F (479 aa).

S-adenosyl-L-methionine contacts are provided by residues 125-131 (AAAPGSK), E149, D176, and D194. Residue C247 is the Nucleophile of the active site.

The protein belongs to the class I-like SAM-binding methyltransferase superfamily. RsmB/NOP family.

The protein resides in the cytoplasm. The enzyme catalyses cytidine(1407) in 16S rRNA + S-adenosyl-L-methionine = 5-methylcytidine(1407) in 16S rRNA + S-adenosyl-L-homocysteine + H(+). Specifically methylates the cytosine at position 1407 (m5C1407) of 16S rRNA. This chain is Ribosomal RNA small subunit methyltransferase F, found in Escherichia coli O127:H6 (strain E2348/69 / EPEC).